The sequence spans 134 residues: Small ribosomal subunit protein uS11 (134 aa).

This sequence belongs to the universal ribosomal protein uS11 family. As to quaternary structure, part of the 30S ribosomal subunit. Interacts with proteins S7 and S18. Binds to IF-3.

Its function is as follows. Located on the platform of the 30S subunit, it bridges several disparate RNA helices of the 16S rRNA. Forms part of the Shine-Dalgarno cleft in the 70S ribosome. In Janthinobacterium sp. (strain Marseille) (Minibacterium massiliensis), this protein is Small ribosomal subunit protein uS11.